The sequence spans 200 residues: Glutathione peroxidase 1 (200 aa).

At Ser31 the chain carries Phosphoserine. Sec46 is a catalytic residue. Sec46 is a non-standard amino acid (selenocysteine). Lys85 and Lys111 each carry N6-acetyllysine; alternate. N6-succinyllysine; alternate is present on residues Lys85 and Lys111. At Lys118 the chain carries N6-acetyllysine. N6-acetyllysine; alternate is present on Lys145. At Lys145 the chain carries N6-succinyllysine; alternate. A Phosphoserine modification is found at Ser194.

The protein belongs to the glutathione peroxidase family. In terms of assembly, homotetramer. Interacts with MIEN1. Post-translationally, during periods of oxidative stress, Sec-46 may react with a superoxide radical, irreversibly lose hydroselenide and be converted to dehydroalanine.

Its subcellular location is the cytoplasm. The protein resides in the mitochondrion. The enzyme catalyses 2 glutathione + H2O2 = glutathione disulfide + 2 H2O. It catalyses the reaction a hydroperoxy polyunsaturated fatty acid + 2 glutathione = a hydroxy polyunsaturated fatty acid + glutathione disulfide + H2O. It carries out the reaction tert-butyl hydroperoxide + 2 glutathione = tert-butanol + glutathione disulfide + H2O. The catalysed reaction is cumene hydroperoxide + 2 glutathione = 2-phenylpropan-2-ol + glutathione disulfide + H2O. The enzyme catalyses (13S)-hydroperoxy-(9Z,11E)-octadecadienoate + 2 glutathione = (13S)-hydroxy-(9Z,11E)-octadecadienoate + glutathione disulfide + H2O. It catalyses the reaction (9S)-hydroperoxy-(10E,12Z)-octadecadienoate + 2 glutathione = (9S)-hydroxy-(10E,12Z)-octadecadienoate + glutathione disulfide + H2O. It carries out the reaction (5S)-hydroperoxy-(6E,8Z,11Z,14Z)-eicosatetraenoate + 2 glutathione = (5S)-hydroxy-(6E,8Z,11Z,14Z)-eicosatetraenoate + glutathione disulfide + H2O. The catalysed reaction is (12S)-hydroperoxy-(5Z,8Z,10E,14Z)-eicosatetraenoate + 2 glutathione = (12S)-hydroxy-(5Z,8Z,10E,14Z)-eicosatetraenoate + glutathione disulfide + H2O. The enzyme catalyses (12R)-hydroperoxy-(5Z,8Z,10E,14Z)-eicosatetraenoate + 2 glutathione = (12R)-hydroxy-(5Z,8Z,10E,14Z)-eicosatetraenoate + glutathione disulfide + H2O. It catalyses the reaction (15S)-hydroperoxy-(5Z,8Z,11Z,13E)-eicosatetraenoate + 2 glutathione = (15S)-hydroxy-(5Z,8Z,11Z,13E)-eicosatetraenoate + glutathione disulfide + H2O. It carries out the reaction (5S)-hydroperoxy-(6E,8Z,11Z,14Z,17Z)-eicosapentaenoate + 2 glutathione = (5S)-hydroxy-(6E,8Z,11Z,14Z,17Z)-eicosapentaenoate + glutathione disulfide + H2O. The catalysed reaction is (12S)-hydroperoxy-(5Z,8Z,10E,14Z,17Z)-eicosapentaenoate + 2 glutathione = (12S)-hydroxy-(5Z,8Z,10E,14Z,17Z)-eicosapentaenoate + glutathione disulfide + H2O. The enzyme catalyses (15S)-hydroperoxy-(5Z,8Z,11Z,13E,17Z)-eicosapentaenoate + 2 glutathione = (15S)-hydroxy-(5Z,8Z,11Z,13E,17Z)-eicosapentaenoate + glutathione disulfide + H2O. It catalyses the reaction (15S)-hydroperoxy-(11Z,13E)-eicosadienoate + 2 glutathione = (15S)-hydroxy-(11Z,13E)-eicosadienoate + glutathione disulfide + H2O. It carries out the reaction (17S)-hydroperoxy-(4Z,7Z,10Z,13Z,15E,19Z)-docosahexaenoate + 2 glutathione = (17S)-hydroxy-(4Z,7Z,10Z,13Z,15E,19Z)-docosahexaenoate + glutathione disulfide + H2O. Functionally, catalyzes the reduction of hydroperoxides in a glutathione-dependent manner thus regulating cellular redox homeostasis. Can reduce small soluble hydroperoxides such as H2O2, cumene hydroperoxide and tert-butyl hydroperoxide, as well as several fatty acid-derived hydroperoxides. In platelets catalyzes the reduction of 12-hydroperoxyeicosatetraenoic acid, the primary product of the arachidonate 12-lipoxygenase pathway. The polypeptide is Glutathione peroxidase 1 (GPX1) (Oryctolagus cuniculus (Rabbit)).